Consider the following 61-residue polypeptide: Protein translocase subunit SecE (61 aa).

The chain crosses the membrane as a helical span at residues Val39–Phe59.

The protein belongs to the SecE/SEC61-gamma family. Component of the Sec protein translocase complex. Heterotrimer consisting of SecY (alpha), SecG (beta) and SecE (gamma) subunits. The heterotrimers can form oligomers, although 1 heterotrimer is thought to be able to translocate proteins. Interacts with the ribosome. May interact with SecDF, and other proteins may be involved.

The protein localises to the cell membrane. Functionally, essential subunit of the Sec protein translocation channel SecYEG. Clamps together the 2 halves of SecY. May contact the channel plug during translocation. The chain is Protein translocase subunit SecE from Methanosphaera stadtmanae (strain ATCC 43021 / DSM 3091 / JCM 11832 / MCB-3).